Reading from the N-terminus, the 160-residue chain is 3-dehydroquinate dehydratase (160 aa).

The active-site Proton acceptor is the Tyr-28. 3 residues coordinate substrate: Asn-79, His-85, and Asp-92. The Proton donor role is filled by His-105. Substrate is bound by residues 106–107 (MS) and Arg-116.

Belongs to the type-II 3-dehydroquinase family. As to quaternary structure, homododecamer.

The catalysed reaction is 3-dehydroquinate = 3-dehydroshikimate + H2O. Its pathway is metabolic intermediate biosynthesis; chorismate biosynthesis; chorismate from D-erythrose 4-phosphate and phosphoenolpyruvate: step 3/7. Its function is as follows. Catalyzes a trans-dehydration via an enolate intermediate. This is 3-dehydroquinate dehydratase from Gloeobacter violaceus (strain ATCC 29082 / PCC 7421).